Consider the following 129-residue polypeptide: Ferredoxin-1 (129 aa).

One can recognise a 2Fe-2S ferredoxin-type domain in the interval 29-120 (SDMDLDDEDY…EVKIVYNAKH (92 aa)). [2Fe-2S] cluster contacts are provided by Cys-64, Cys-69, Cys-72, and Cys-103.

It belongs to the 2Fe2S plant-type ferredoxin family. Requires [2Fe-2S] cluster as cofactor.

Functionally, ferredoxins are iron-sulfur proteins that transfer electrons in a wide variety of metabolic reactions. In Haloarcula marismortui (strain ATCC 43049 / DSM 3752 / JCM 8966 / VKM B-1809) (Halobacterium marismortui), this protein is Ferredoxin-1 (fer1).